We begin with the raw amino-acid sequence, 95 residues long: Aspartyl/glutamyl-tRNA(Asn/Gln) amidotransferase subunit C (95 aa).

Belongs to the GatC family. As to quaternary structure, heterotrimer of A, B and C subunits.

The catalysed reaction is L-glutamyl-tRNA(Gln) + L-glutamine + ATP + H2O = L-glutaminyl-tRNA(Gln) + L-glutamate + ADP + phosphate + H(+). It carries out the reaction L-aspartyl-tRNA(Asn) + L-glutamine + ATP + H2O = L-asparaginyl-tRNA(Asn) + L-glutamate + ADP + phosphate + 2 H(+). Functionally, allows the formation of correctly charged Asn-tRNA(Asn) or Gln-tRNA(Gln) through the transamidation of misacylated Asp-tRNA(Asn) or Glu-tRNA(Gln) in organisms which lack either or both of asparaginyl-tRNA or glutaminyl-tRNA synthetases. The reaction takes place in the presence of glutamine and ATP through an activated phospho-Asp-tRNA(Asn) or phospho-Glu-tRNA(Gln). The protein is Aspartyl/glutamyl-tRNA(Asn/Gln) amidotransferase subunit C of Prochlorococcus marinus (strain NATL1A).